An 89-amino-acid polypeptide reads, in one-letter code: Neurotoxin LmNaTx28 (89 aa).

Positions 1–18 are cleaved as a signal peptide; it reads MNLPTVLCIIALILGVRS. An LCN-type CS-alpha/beta domain is found at 20-85; that stretch reads KNGFFTKLGK…VADSSEKACQ (66 aa). Disulfide bonds link Cys-33–Cys-57, Cys-43–Cys-62, Cys-47–Cys-64, and Cys-58–Cys-84.

The protein belongs to the long (4 C-C) scorpion toxin superfamily. Sodium channel inhibitor family. Beta subfamily. In terms of tissue distribution, expressed by the venom gland.

It is found in the secreted. Functionally, binds voltage-independently at site-4 of sodium channels (Nav) and shift the voltage of activation toward more negative potentials thereby affecting sodium channel activation and promoting spontaneous and repetitive firing. The protein is Neurotoxin LmNaTx28 of Lychas mucronatus (Chinese swimming scorpion).